A 413-amino-acid chain; its full sequence is Precorrin-6Y C(5,15)-methyltransferase [decarboxylating] (413 aa).

The protein belongs to the precorrin methyltransferase family.

The catalysed reaction is precorrin-6B + 2 S-adenosyl-L-methionine = precorrin-8X + 2 S-adenosyl-L-homocysteine + CO2 + 3 H(+). It participates in cofactor biosynthesis; adenosylcobalamin biosynthesis; cob(II)yrinate a,c-diamide from precorrin-2 (aerobic route): step 7/10. In terms of biological role, catalyzes the methylation of both C-5 and C-15 in precorrin-6Y to form precorrin-8X. In Sinorhizobium sp, this protein is Precorrin-6Y C(5,15)-methyltransferase [decarboxylating] (cobL).